Reading from the N-terminus, the 348-residue chain is Protein pelota homolog (348 aa).

Belongs to the eukaryotic release factor 1 family. Pelota subfamily. Monomer. The cofactor is a divalent metal cation.

The protein localises to the cytoplasm. May function in recognizing stalled ribosomes, interact with stem-loop structures in stalled mRNA molecules, and effect endonucleolytic cleavage of the mRNA. May play a role in the release non-functional ribosomes and degradation of damaged mRNAs. Has endoribonuclease activity. The chain is Protein pelota homolog from Methanococcus maripaludis (strain C5 / ATCC BAA-1333).